Consider the following 414-residue polypeptide: Multifunctional CCA protein (414 aa).

2 residues coordinate ATP: G8 and R11. Residues G8 and R11 each coordinate CTP. The Mg(2+) site is built by E21 and D23. ATP is bound by residues R91, R137, and R140. CTP-binding residues include R91, R137, and R140. In terms of domain architecture, HD spans 228-329; that stretch reads TGIHTMMTVA…LKLFDAIDVW (102 aa).

The protein belongs to the tRNA nucleotidyltransferase/poly(A) polymerase family. Bacterial CCA-adding enzyme type 1 subfamily. Monomer. Can also form homodimers and oligomers. Mg(2+) serves as cofactor. Ni(2+) is required as a cofactor.

The catalysed reaction is a tRNA precursor + 2 CTP + ATP = a tRNA with a 3' CCA end + 3 diphosphate. The enzyme catalyses a tRNA with a 3' CCA end + 2 CTP + ATP = a tRNA with a 3' CCACCA end + 3 diphosphate. Its function is as follows. Catalyzes the addition and repair of the essential 3'-terminal CCA sequence in tRNAs without using a nucleic acid template. Adds these three nucleotides in the order of C, C, and A to the tRNA nucleotide-73, using CTP and ATP as substrates and producing inorganic pyrophosphate. tRNA 3'-terminal CCA addition is required both for tRNA processing and repair. Also involved in tRNA surveillance by mediating tandem CCA addition to generate a CCACCA at the 3' terminus of unstable tRNAs. While stable tRNAs receive only 3'-terminal CCA, unstable tRNAs are marked with CCACCA and rapidly degraded. This Pectobacterium atrosepticum (strain SCRI 1043 / ATCC BAA-672) (Erwinia carotovora subsp. atroseptica) protein is Multifunctional CCA protein.